Reading from the N-terminus, the 391-residue chain is Elongation factor Tu (391 aa).

The 192-residue stretch at 10–201 (KPHVNIGTIG…AVDEYIPTPA (192 aa)) folds into the tr-type G domain. Residues 19 to 26 (GHVDHGKT) form a G1 region. Residue 19-26 (GHVDHGKT) coordinates GTP. T26 provides a ligand contact to Mg(2+). A G2 region spans residues 55 to 59 (GITIS). The G3 stretch occupies residues 76–79 (DCPG). GTP is bound by residues 76–80 (DCPGH) and 131–134 (NKVD). Positions 131-134 (NKVD) are G4. The G5 stretch occupies residues 169 to 171 (SAL).

It belongs to the TRAFAC class translation factor GTPase superfamily. Classic translation factor GTPase family. EF-Tu/EF-1A subfamily. In terms of assembly, monomer.

The protein localises to the cytoplasm. The catalysed reaction is GTP + H2O = GDP + phosphate + H(+). GTP hydrolase that promotes the GTP-dependent binding of aminoacyl-tRNA to the A-site of ribosomes during protein biosynthesis. This chain is Elongation factor Tu, found in Cereibacter sphaeroides (strain ATCC 17029 / ATH 2.4.9) (Rhodobacter sphaeroides).